The chain runs to 784 residues: Cas scaffolding protein family member 4 (784 aa).

The region spanning 11–73 (PKALLARALY…PANRLQILEE (63 aa)) is the SH3 domain. Ser-197, Ser-246, Ser-302, Ser-373, and Ser-387 each carry phosphoserine. A disordered region spans residues 343-376 (TPNIYDVPRAMPDVPQAGKELGKAGGPSENSVDH). Residues 466–536 (RDSLEANIDA…LLETKERLES (71 aa)) adopt a coiled-coil conformation. Positions 614-635 (KEGESYQRKAPFQKQRASEQPP) are disordered.

It belongs to the CAS family. As to quaternary structure, interacts (via SH3 domain) with PTK2/FAK1 (via C-terminus). In terms of processing, phosphorylated on tyrosines by SRC.

The protein resides in the cytoplasm. It is found in the cytoskeleton. Its subcellular location is the cell junction. The protein localises to the focal adhesion. Its function is as follows. Docking protein that plays a role in tyrosine kinase-based signaling related to cell adhesion and cell spreading. Regulates PTK2/FAK1 activity, focal adhesion integrity, and cell spreading. The chain is Cas scaffolding protein family member 4 from Sus scrofa (Pig).